Here is a 158-residue protein sequence, read N- to C-terminus: Transcription elongation factor GreA (158 aa).

Residues 47-74 (AEYHAAKEEQSHNEGRINELEDKLARAD) adopt a coiled-coil conformation.

The protein belongs to the GreA/GreB family.

In terms of biological role, necessary for efficient RNA polymerase transcription elongation past template-encoded arresting sites. The arresting sites in DNA have the property of trapping a certain fraction of elongating RNA polymerases that pass through, resulting in locked ternary complexes. Cleavage of the nascent transcript by cleavage factors such as GreA or GreB allows the resumption of elongation from the new 3'terminus. GreA releases sequences of 2 to 3 nucleotides. This Rhodopseudomonas palustris (strain ATCC BAA-98 / CGA009) protein is Transcription elongation factor GreA.